A 955-amino-acid polypeptide reads, in one-letter code: Kinesin-like protein NACK2 (955 aa).

The Kinesin motor domain occupies 36 to 357 (KILVTIRVRP…LCFATSAKEV (322 aa)). 120–127 (GQTSSGKT) lines the ATP pocket. Coiled-coil stretches lie at residues 366–443 (VVAE…LKGS) and 566–604 (KASL…VMHL).

It belongs to the TRAFAC class myosin-kinesin ATPase superfamily. Kinesin family. KIN-7 subfamily.

The protein resides in the cytoplasm. Its subcellular location is the nucleus. It localises to the cytoskeleton. The protein localises to the phragmoplast. Its function is as follows. Probable plus end-directed motor protein that may function in the NACK-PQR (NPK1-NQK1/MEK1-NRK1) MAP kinase signaling pathway, which is essential for somatic cell cytokinesis, especially for the cell-plate formation and its expansion. May regulate the activity and the localization of NPK1, probably by association through the non-catalytic region of the kinase. The protein is Kinesin-like protein NACK2 (NACK2) of Nicotiana tabacum (Common tobacco).